A 177-amino-acid chain; its full sequence is Adenine phosphoribosyltransferase (177 aa).

This sequence belongs to the purine/pyrimidine phosphoribosyltransferase family. In terms of assembly, homodimer.

It is found in the cytoplasm. The catalysed reaction is AMP + diphosphate = 5-phospho-alpha-D-ribose 1-diphosphate + adenine. It participates in purine metabolism; AMP biosynthesis via salvage pathway; AMP from adenine: step 1/1. Functionally, catalyzes a salvage reaction resulting in the formation of AMP, that is energically less costly than de novo synthesis. This Chlorobaculum tepidum (strain ATCC 49652 / DSM 12025 / NBRC 103806 / TLS) (Chlorobium tepidum) protein is Adenine phosphoribosyltransferase.